A 316-amino-acid polypeptide reads, in one-letter code: Pantothenate kinase (316 aa).

95–102 (GSVAVGKS) is an ATP binding site.

The protein belongs to the prokaryotic pantothenate kinase family.

It localises to the cytoplasm. The enzyme catalyses (R)-pantothenate + ATP = (R)-4'-phosphopantothenate + ADP + H(+). It participates in cofactor biosynthesis; coenzyme A biosynthesis; CoA from (R)-pantothenate: step 1/5. The protein is Pantothenate kinase of Enterobacter sp. (strain 638).